Here is a 909-residue protein sequence, read N- to C-terminus: Protein translocase subunit SecA (909 aa).

Residues Gln87, 105-109 (GEGKT), and Asp514 contribute to the ATP site. The interval 879–909 (TPVQGGPKVGRNDPCPCGSGKKYKHCHGKLS) is disordered. Cys893, Cys895, Cys904, and His905 together coordinate Zn(2+). The span at 899–909 (KKYKHCHGKLS) shows a compositional bias: basic residues.

The protein belongs to the SecA family. As to quaternary structure, monomer and homodimer. Part of the essential Sec protein translocation apparatus which comprises SecA, SecYEG and auxiliary proteins SecDF-YajC and YidC. Requires Zn(2+) as cofactor.

It localises to the cell inner membrane. The protein resides in the cytoplasm. The catalysed reaction is ATP + H2O + cellular proteinSide 1 = ADP + phosphate + cellular proteinSide 2.. Functionally, part of the Sec protein translocase complex. Interacts with the SecYEG preprotein conducting channel. Has a central role in coupling the hydrolysis of ATP to the transfer of proteins into and across the cell membrane, serving both as a receptor for the preprotein-SecB complex and as an ATP-driven molecular motor driving the stepwise translocation of polypeptide chains across the membrane. The protein is Protein translocase subunit SecA of Azoarcus sp. (strain BH72).